The primary structure comprises 270 residues: Bis(5'-nucleosyl)-tetraphosphatase, symmetrical (270 aa).

The protein belongs to the Ap4A hydrolase family.

It catalyses the reaction P(1),P(4)-bis(5'-adenosyl) tetraphosphate + H2O = 2 ADP + 2 H(+). Its function is as follows. Hydrolyzes diadenosine 5',5'''-P1,P4-tetraphosphate to yield ADP. The chain is Bis(5'-nucleosyl)-tetraphosphatase, symmetrical from Thioalkalivibrio sulfidiphilus (strain HL-EbGR7).